We begin with the raw amino-acid sequence, 256 residues long: Hydroxyacylglutathione hydrolase (256 aa).

Residues histidine 53, histidine 55, aspartate 57, histidine 58, histidine 111, aspartate 128, and histidine 166 each contribute to the Zn(2+) site.

It belongs to the metallo-beta-lactamase superfamily. Glyoxalase II family. As to quaternary structure, monomer. It depends on Zn(2+) as a cofactor.

It catalyses the reaction an S-(2-hydroxyacyl)glutathione + H2O = a 2-hydroxy carboxylate + glutathione + H(+). Its pathway is secondary metabolite metabolism; methylglyoxal degradation; (R)-lactate from methylglyoxal: step 2/2. Its function is as follows. Thiolesterase that catalyzes the hydrolysis of S-D-lactoyl-glutathione to form glutathione and D-lactic acid. The sequence is that of Hydroxyacylglutathione hydrolase from Thiobacillus denitrificans (strain ATCC 25259 / T1).